Consider the following 163-residue polypeptide: tRNA-acetylating toxin 2 (163 aa).

Tyrosine 137 is a catalytic residue.

The protein belongs to the acetyltransferase family. GNAT subfamily. Homodimer. Forms a complex with cognate antitoxin TacA2.

It catalyses the reaction glycyl-tRNA(Gly) + acetyl-CoA = N-acetylglycyl-tRNA(Gly) + CoA + H(+). The enzyme catalyses L-isoleucyl-tRNA(Ile) + acetyl-CoA = N-acetyl-L-isoleucyl-tRNA(Ile) + CoA + H(+). It carries out the reaction L-leucyl-tRNA(Leu) + acetyl-CoA = N-acetyl-L-leucyl-tRNA(Leu) + CoA + H(+). In terms of biological role, toxic component of a type II toxin-antitoxin (TA) system. Acetylates tRNA and inhibits translation. Acetylates mainly Gly and Ile/Leu in vitro. Overexpression during the lag phase of a tacA2-tacT2 deletion strain leads to a 100-fold increase in persister cells in the presence of cefotaxime and a non-growth state in the absence of antibiotic. This protein, which has a single amino acid compared to S.typhimurium strain 14028s (Lys-29 is Glu in 14028s), produces 100-fold more persister cells, has much higher acetylation activity and binds tRNA much better. Persister cell formation and the growth defect are neutralized by cognate antitoxin TacA2. Its function is as follows. The TacA2-TacT2 complex both represses and derepresses expression of its own operon. In Salmonella enteritidis, this protein is tRNA-acetylating toxin 2.